Consider the following 1653-residue polypeptide: Protein TOPAZ1 (1653 aa).

Disordered stretches follow at residues 1–94 (MRPP…TDLV), 284–303 (YSVE…KSGK), and 415–442 (ISST…SETE). The segment covering 63-78 (GREETEGDKLAKENGK) has biased composition (basic and acidic residues). Basic and acidic residues predominate over residues 423–442 (SDGHHMEKRSPRGDLRSETE).

In terms of tissue distribution, restricted to testis, where it localizes to germ cells.

It localises to the cytoplasm. The protein resides in the cytosol. In terms of biological role, important for normal spermatogenesis and male fertility. Specifically required for progression to the post-meiotic stages of spermatocyte development. Seems to be necessary for normal expression levels of a number of testis-expressed gene transcripts, although its role in this process is unclear. This chain is Protein TOPAZ1, found in Mus musculus (Mouse).